Consider the following 65-residue polypeptide: MNGKVKWFNNEKGFGFIEMEGSEDVFVHFSAIQSDGYKALEEGQEVSFDITEGNRGPQAANVAKL.

Positions 3–62 constitute a CSD domain; it reads GKVKWFNNEKGFGFIEMEGSEDVFVHFSAIQSDGYKALEEGQEVSFDITEGNRGPQAANV.

As to quaternary structure, homodimer.

Its subcellular location is the cytoplasm. The chain is Cold shock-like protein CspB (cspB) from Bacillus cereus.